Consider the following 185-residue polypeptide: Ribosome-recycling factor (185 aa).

The protein belongs to the RRF family.

The protein localises to the cytoplasm. In terms of biological role, responsible for the release of ribosomes from messenger RNA at the termination of protein biosynthesis. May increase the efficiency of translation by recycling ribosomes from one round of translation to another. This chain is Ribosome-recycling factor, found in Edwardsiella ictaluri (strain 93-146).